A 118-amino-acid chain; its full sequence is Ribonuclease P protein component (118 aa).

This sequence belongs to the RnpA family. As to quaternary structure, consists of a catalytic RNA component (M1 or rnpB) and a protein subunit.

It catalyses the reaction Endonucleolytic cleavage of RNA, removing 5'-extranucleotides from tRNA precursor.. Its function is as follows. RNaseP catalyzes the removal of the 5'-leader sequence from pre-tRNA to produce the mature 5'-terminus. It can also cleave other RNA substrates such as 4.5S RNA. The protein component plays an auxiliary but essential role in vivo by binding to the 5'-leader sequence and broadening the substrate specificity of the ribozyme. The polypeptide is Ribonuclease P protein component (Vibrio campbellii (strain ATCC BAA-1116)).